We begin with the raw amino-acid sequence, 244 residues long: Ubiquinone biosynthesis O-methyltransferase (244 aa).

S-adenosyl-L-methionine is bound by residues Arg36, Gly60, Asp81, and Leu123.

This sequence belongs to the methyltransferase superfamily. UbiG/COQ3 family.

The catalysed reaction is a 3-demethylubiquinol + S-adenosyl-L-methionine = a ubiquinol + S-adenosyl-L-homocysteine + H(+). It carries out the reaction a 3-(all-trans-polyprenyl)benzene-1,2-diol + S-adenosyl-L-methionine = a 2-methoxy-6-(all-trans-polyprenyl)phenol + S-adenosyl-L-homocysteine + H(+). Its pathway is cofactor biosynthesis; ubiquinone biosynthesis. O-methyltransferase that catalyzes the 2 O-methylation steps in the ubiquinone biosynthetic pathway. The chain is Ubiquinone biosynthesis O-methyltransferase from Rickettsia felis (strain ATCC VR-1525 / URRWXCal2) (Rickettsia azadi).